The primary structure comprises 633 residues: Chaperone protein DnaK (633 aa).

Residue T198 is modified to Phosphothreonine; by autocatalysis. The tract at residues 599–633 (QQASQETPGDGDAGAAGAKKKDDDDVVDADYEEVK) is disordered. Positions 622–633 (DDVVDADYEEVK) are enriched in acidic residues.

It belongs to the heat shock protein 70 family.

In terms of biological role, acts as a chaperone. This Desulfotalea psychrophila (strain LSv54 / DSM 12343) protein is Chaperone protein DnaK.